We begin with the raw amino-acid sequence, 264 residues long: uncharacterized protein (264 aa).

A helical membrane pass occupies residues 182–198 (TVTGVSNALGFIIAALL).

The protein to E.coli YjiC.

The protein localises to the membrane. This is an uncharacterized protein from Escherichia coli (strain K12).